The following is a 148-amino-acid chain: Large ribosomal subunit protein bL9 (148 aa).

Belongs to the bacterial ribosomal protein bL9 family.

In terms of biological role, binds to the 23S rRNA. This is Large ribosomal subunit protein bL9 from Bifidobacterium longum (strain DJO10A).